The chain runs to 101 residues: Putative pterin-4-alpha-carbinolamine dehydratase (101 aa).

The protein belongs to the pterin-4-alpha-carbinolamine dehydratase family.

It catalyses the reaction (4aS,6R)-4a-hydroxy-L-erythro-5,6,7,8-tetrahydrobiopterin = (6R)-L-erythro-6,7-dihydrobiopterin + H2O. The protein is Putative pterin-4-alpha-carbinolamine dehydratase of Ralstonia pickettii (strain 12J).